The following is a 1342-amino-acid chain: MVYSYTEKKRIRKDFGKRPKVLDIPYLLSIQLNSFKKFIQPDLSGQHGLEAAFRSVFPIRGYNGNSELQYVSYRLGETIFDVKECQIRGATYSAPLRVKLRLVIYERDILEATVKDIKEQEVYMGEIPLMTNNGTFIINGTERVVVSQLHRSPGVFFDSDKGKTHSSGKVLYNARIIPYRGSWLDFEFDPKDNLFVRIDRRRKLPVSIILRALNYNTEEILNIFFEKNIFKIENNKIVLELVPERLRGETASFNIKKNGIIYVEKGRRITAKHIQELKNNKIKSITVPVEYILGRIVSKNYVDKKTGETIISSNTELSLEILEKLKKSGFYSIETLFTNDLDHGPYISETLRIDSSNDRMSALIEIYRVMRPGEPPTKEATENLFENLFFSEDRYDLSTVGRMKFNRSLLREETKGSSTLNKEDIIDVIKKIIDIRNGKGEVDDIDHLGNRRVRSVGEMAENQFRIGLVRVERAVKERLSIGDLDTLMPQDMINAKPISAAVKEFFGSSQLSQFMDQNNPLSEITHKRRISALGLGGLTRERAGFEVRDVHPTHYGRVCPIETPEGPNIGLINSLSVYAQTNSYGFLETPYRKVCNGLVSEEIHYLSAIEEGNYIIAQANTNIDKTGFFTDDLVTCRHKGESSLFNRNQVNYMDVSTQQIVSVGASLIPFLEHDDANRALMGANMQRQAVPTLKTDKPLIGTGMERAVAVDSGVTAVAKRSGVVQYVDASRIVIKVDEKEMYSREAGIDIYNLTKYTRSNQNTCINQQPCVNLGEKIKKGDVLADGPSTDLGELALGQNMRVAFMPWNGYNFEDSILVSERVVQEDRFTTIHIQELSCISRDTKLGAEEISSDIPNVGEAALSKLDESGIVYIGAEVTGGDILVGKVTPKGETQLTPEEKLLRAIFGEKASDVKDSSLRVPNGVSGTVIDVQIFTRDGVKKDKRALEIEDMQLKKIKQDLTEEFKIFESSLFTHIKKTFISLDIETKQLDTLPFEKWFSVDIKQKDKKKEIEKLAKQHHELKEEFNKKIEIKRQKITQGDDLAPGVLKIVKVYLAVKRQIQPGDKMAGRHGNKGVISKINPVEDMPYDENGIPVDIVLNPLGVPSRMNIGQILETHLGMAAKGIGDKINHMLKTQEKISNLRKFIQKAFDLGDNLRQKVNLDTFSNEEILRLAKNLKNGIPISTPVFDGAQENEIKQMLKFAGLPTSGQIILFDGRTGEKFERPVTVGYMYMLKLNHLVDDKMHARSTGSYSLVTQQPLGGKAQFGGQRFGEMEVWALEAYGASYTLQEMLTVKSDDVNGRTKMYKNIVDGNHQMEPGMPESFNVLLKEIRSLGINIELESE.

The protein belongs to the RNA polymerase beta chain family. As to quaternary structure, the RNAP catalytic core consists of 2 alpha, 1 beta, 1 beta' and 1 omega subunit. When a sigma factor is associated with the core the holoenzyme is formed, which can initiate transcription.

It carries out the reaction RNA(n) + a ribonucleoside 5'-triphosphate = RNA(n+1) + diphosphate. DNA-dependent RNA polymerase catalyzes the transcription of DNA into RNA using the four ribonucleoside triphosphates as substrates. The polypeptide is DNA-directed RNA polymerase subunit beta (Buchnera aphidicola subsp. Acyrthosiphon pisum (strain Tuc7)).